The primary structure comprises 449 residues: UDP-glycosyltransferase 76E7 (449 aa).

Residues Ser-275, 333-335 (APQ), 350-358 (HCGWNSTLE), and 372-375 (TTDQ) contribute to the UDP-alpha-D-glucose site.

The protein belongs to the UDP-glycosyltransferase family.

The polypeptide is UDP-glycosyltransferase 76E7 (UGT76E7) (Arabidopsis thaliana (Mouse-ear cress)).